We begin with the raw amino-acid sequence, 570 residues long: Vacuolar protein sorting-associated protein 45 (570 aa).

Residues Ser307 and Ser441 each carry the phosphoserine modification.

The protein belongs to the STXBP/unc-18/SEC1 family. As to quaternary structure, interacts with STX6. Interacts with ZFYVE20. As to expression, ubiquitous. Expression was highest in testis, heart and brain, intermediate in kidney, spleen, prostate, ovary, small intestine and thymus and low in lung, skeletal muscle, placenta, colon, pancreas, peripheral blood leukocytes and liver.

It localises to the golgi apparatus membrane. It is found in the endosome membrane. In terms of biological role, may play a role in vesicle-mediated protein trafficking from the Golgi stack through the trans-Golgi network. The sequence is that of Vacuolar protein sorting-associated protein 45 (VPS45) from Homo sapiens (Human).